A 414-amino-acid polypeptide reads, in one-letter code: DNA polymerase IV 1 (414 aa).

The UmuC domain occupies 8–189 (IFHIDMNSFY…LPVGEMHGVG (182 aa)). Aspartate 12 and aspartate 108 together coordinate Mg(2+). Glutamate 109 is an active-site residue. The segment at 391–414 (LKKEESKTKGTSFNKDFFQDEKKS) is disordered.

The protein belongs to the DNA polymerase type-Y family. In terms of assembly, monomer. It depends on Mg(2+) as a cofactor.

Its subcellular location is the cytoplasm. The catalysed reaction is DNA(n) + a 2'-deoxyribonucleoside 5'-triphosphate = DNA(n+1) + diphosphate. Functionally, poorly processive, error-prone DNA polymerase involved in untargeted mutagenesis. Copies undamaged DNA at stalled replication forks, which arise in vivo from mismatched or misaligned primer ends. These misaligned primers can be extended by PolIV. Exhibits no 3'-5' exonuclease (proofreading) activity. May be involved in translesion synthesis (TSL), in conjunction with the beta clamp from PolIII. This is DNA polymerase IV 1 (dinB1) from Bacillus subtilis (strain 168).